The following is a 98-amino-acid chain: PsbF-like protein (98 aa).

The next 2 membrane-spanning stretches (helical) occupy residues 5–25 and 73–93; these read VLLVISPIIFAWIFTVFWLGK and TAAVNALGIPTVFFLGAILAM.

It belongs to the PsbE/PsbF family.

It is found in the membrane. Its function is as follows. Unknown. Resembles PsbF, one of the subunits of the photosystem II reaction center. However, it encodes asparagine rather than histidine at the site PsbF uses to bind heme. The sequence is that of PsbF-like protein from Prochlorococcus marinus (strain MIT 9312).